Consider the following 335-residue polypeptide: UPF0353 protein MAP_3435c (335 aa).

The next 2 helical transmembrane spans lie at 18–38 (WFFLALLAVLLVIGLYVVQQF) and 67–87 (VPTILLATSLVLLTTAMAGPT). The 197-residue stretch at 98–294 (VVMLVIDVSE…DSLKNVYSTL (197 aa)) folds into the VWFA domain. The chain crosses the membrane as a helical span at residues 309 to 329 (MAWMLLGAVVLAGAVLAGLLL).

This sequence belongs to the UPF0353 family.

The protein resides in the cell membrane. The protein is UPF0353 protein MAP_3435c of Mycolicibacterium paratuberculosis (strain ATCC BAA-968 / K-10) (Mycobacterium paratuberculosis).